Reading from the N-terminus, the 345-residue chain is Membrane progestin receptor gamma-A (345 aa).

The Cytoplasmic segment spans residues 1 to 52 (MLNLIKLPQVFTINQVPKVFHEDGIISGYRHPCSSAKDCVLSLFQLTNETLN). A helical transmembrane segment spans residues 53 to 73 (IWTHFLPTWFFLWKLLTVVLV). The Extracellular segment spans residues 74 to 80 (LEDWRDP). A helical transmembrane segment spans residues 81 to 101 (FIWPFLVFLLSCCVYPLASSC). Over 102-114 (AHTFSTMSERARH) the chain is Cytoplasmic. A helical transmembrane segment spans residues 115–135 (ICFFFDYGALSFYSLGSAIIY). The Extracellular portion of the chain corresponds to 136–148 (SSYSFPDKWVNGT). A helical membrane pass occupies residues 149-169 (FHLNYVSIAVVNSIISTALAC). Topologically, residues 170–201 (YSRLGLPFLEYNCHSIKRPSGKLDQKLCKCLR) are cytoplasmic. The helical transmembrane segment at 202–222 (IIAFVYPYLFDNIPLFYRIFV) threads the bilayer. The Extracellular portion of the chain corresponds to 223–272 (CAGEGCTVNEANTVHYQHTSLAFFTGFLFATHLPERLAPGSFDYIGHSHQ). Residues 273-293 (LFHVFAIIGTYFQMTAIELDM) form a helical membrane-spanning segment. Residues 294 to 314 (AARKQWLHAHLPPVTFLNTVG) lie on the Cytoplasmic side of the membrane. Residues 315-335 (AAFFSVVSGLCIVYVFSLSLF) form a helical membrane-spanning segment. Residues 336–345 (STRGVKNKSF) are Extracellular-facing.

It belongs to the ADIPOR family.

The protein resides in the membrane. In terms of biological role, steroid membrane receptor. Binds progesterone. May be involved in oocyte maturation. This is Membrane progestin receptor gamma-A (paqr5a) from Danio rerio (Zebrafish).